We begin with the raw amino-acid sequence, 246 residues long: ATP synthase subunit a, chloroplastic (246 aa).

5 helical membrane-spanning segments follow: residues 35-55, 94-114, 132-152, 198-218, and 219-239; these read GQVL…GLIA, VPFI…GALL, DINT…YAGI, LVVG…VMLL, and GVFT…AYIG.

It belongs to the ATPase A chain family. F-type ATPases have 2 components, CF(1) - the catalytic core - and CF(0) - the membrane proton channel. CF(1) has five subunits: alpha(3), beta(3), gamma(1), delta(1), epsilon(1). CF(0) has four main subunits: a, b, b' and c.

The protein localises to the plastid. It localises to the chloroplast thylakoid membrane. Functionally, key component of the proton channel; it plays a direct role in the translocation of protons across the membrane. The protein is ATP synthase subunit a, chloroplastic of Stigeoclonium helveticum (Green alga).